Here is a 1179-residue protein sequence, read N- to C-terminus: DNA-directed RNA polymerase subunit beta (1179 aa).

Belongs to the RNA polymerase beta chain family. In terms of assembly, the RNAP catalytic core consists of 2 alpha, 1 beta, 1 beta' and 1 omega subunit. When a sigma factor is associated with the core the holoenzyme is formed, which can initiate transcription.

It catalyses the reaction RNA(n) + a ribonucleoside 5'-triphosphate = RNA(n+1) + diphosphate. In terms of biological role, DNA-dependent RNA polymerase catalyzes the transcription of DNA into RNA using the four ribonucleoside triphosphates as substrates. The sequence is that of DNA-directed RNA polymerase subunit beta from Oceanobacillus iheyensis (strain DSM 14371 / CIP 107618 / JCM 11309 / KCTC 3954 / HTE831).